Here is a 255-residue protein sequence, read N- to C-terminus: Phosphate import ATP-binding protein PstB (255 aa).

The ABC transporter domain maps to 9–250; the sequence is MYAQGLQFYY…PRNKQTEDYI (242 aa). 41-48 provides a ligand contact to ATP; the sequence is GPSGCGKS.

The protein belongs to the ABC transporter superfamily. Phosphate importer (TC 3.A.1.7) family. As to quaternary structure, the complex is composed of two ATP-binding proteins (PstB), two transmembrane proteins (PstC and PstA) and a solute-binding protein (PstS).

It localises to the cell inner membrane. The enzyme catalyses phosphate(out) + ATP + H2O = ADP + 2 phosphate(in) + H(+). In terms of biological role, part of the ABC transporter complex PstSACB involved in phosphate import. Responsible for energy coupling to the transport system. This is Phosphate import ATP-binding protein PstB from Nitratidesulfovibrio vulgaris (strain ATCC 29579 / DSM 644 / CCUG 34227 / NCIMB 8303 / VKM B-1760 / Hildenborough) (Desulfovibrio vulgaris).